Here is a 31-residue protein sequence, read N- to C-terminus: Cytochrome b6-f complex subunit 6 (31 aa).

The helical transmembrane segment at 4–24 threads the bilayer; the sequence is ITSFFGFLLAALTITSVLFIG.

This sequence belongs to the PetL family. As to quaternary structure, the 4 large subunits of the cytochrome b6-f complex are cytochrome b6, subunit IV (17 kDa polypeptide, PetD), cytochrome f and the Rieske protein, while the 4 small subunits are PetG, PetL, PetM and PetN. The complex functions as a dimer.

Its subcellular location is the plastid. The protein resides in the chloroplast thylakoid membrane. Functionally, component of the cytochrome b6-f complex, which mediates electron transfer between photosystem II (PSII) and photosystem I (PSI), cyclic electron flow around PSI, and state transitions. PetL is important for photoautotrophic growth as well as for electron transfer efficiency and stability of the cytochrome b6-f complex. The polypeptide is Cytochrome b6-f complex subunit 6 (Oenothera elata subsp. hookeri (Hooker's evening primrose)).